Here is a 1171-residue protein sequence, read N- to C-terminus: ATP-dependent helicase/deoxyribonuclease subunit B (1171 aa).

Residues 1 to 343 enclose the UvrD-like helicase ATP-binding domain; it reads MSLRFVIGRA…LVAEENYRYR (343 aa). 8 to 15 is a binding site for ATP; it reads GRAGSGKS. Positions 281-587 constitute a UvrD-like helicase C-terminal domain; it reads MEQPRFHSPA…QFANIPPSLD (307 aa). Residues cysteine 805, cysteine 1129, cysteine 1132, and cysteine 1138 each contribute to the [4Fe-4S] cluster site.

Belongs to the helicase family. AddB/RexB type 1 subfamily. As to quaternary structure, heterodimer of AddA and AddB. It depends on Mg(2+) as a cofactor. [4Fe-4S] cluster serves as cofactor.

The heterodimer acts as both an ATP-dependent DNA helicase and an ATP-dependent, dual-direction single-stranded exonuclease. Recognizes the chi site generating a DNA molecule suitable for the initiation of homologous recombination. The AddB subunit has 5' -&gt; 3' nuclease activity but not helicase activity. The polypeptide is ATP-dependent helicase/deoxyribonuclease subunit B (Bacillus anthracis).